The chain runs to 463 residues: tRNA (guanine(10)-N(2))-methyltransferase TRMT11 (463 aa).

A2 bears the N-acetylalanine mark.

Belongs to the class I-like SAM-binding methyltransferase superfamily. TRM11 methyltransferase family. In terms of assembly, part of the heterodimeric TRMT11-TRM112 methyltransferase complex; this complex forms an active tRNA methyltransferase, where TRMT112 acts as an activator of the catalytic subunit TRMT11.

Its subcellular location is the cytoplasm. It carries out the reaction guanosine(10) in tRNA + S-adenosyl-L-methionine = N(2)-methylguanosine(10) in tRNA + S-adenosyl-L-homocysteine + H(+). Functionally, catalytic subunit of the TRMT11-TRM112 methyltransferase complex, that specifically mediates the S-adenosyl-L-methionine-dependent N(2)-methylation of guanosine nucleotide at position 10 (m2G10) in tRNAs. This is one of the major tRNA (guanine-N(2))-methyltransferases. This is tRNA (guanine(10)-N(2))-methyltransferase TRMT11 from Homo sapiens (Human).